The following is a 1043-amino-acid chain: Calcium-transporting ATPase 1, plasma membrane-type (1043 aa).

Topologically, residues 1-178 (MSFIRKKSME…FLWDASQDMT (178 aa)) are cytoplasmic. 2 helical membrane passes run 179 to 199 (LLLL…TEGW) and 202 to 222 (GMYD…ITAA). The Cytoplasmic segment spans residues 223–258 (SDYKQSLQFRDLDKEKKKIDVQVTRDGYRQKVSIYD). 2 helical membrane passes run 259–279 (IVVG…DGLF) and 356–376 (VATI…TVLM). The Cytoplasmic segment spans residues 377–395 (ARFLLGKAGAPGGLLRWRM). A helical membrane pass occupies residues 396–416 (VDALAVLNFFAVAVTIIVVAV). D460 (4-aspartylphosphate intermediate) is an active-site residue. Residues D761 and D765 each contribute to the Mg(2+) site. Residues 824-844 (LTVNVVALMVNFISASFTGSA) traverse the membrane as a helical segment. Position 845 (P845) is a topological domain, cytoplasmic. Transmembrane regions (helical) follow at residues 846–866 (LTIV…ALAL) and 891–911 (VMWR…GVLL). Residues 912–955 (LRGKSLLQINGPQADSLLNTFVFNTFVFCQVFNEVNSREMEKIN) are Cytoplasmic-facing. The next 2 helical transmembrane spans lie at 956-976 (VFSG…TAGF) and 998-1018 (WLTS…LKCI). The Cytoplasmic segment spans residues 1019–1043 (PVESGSDASDRHDGYRPIPTGPSAV). The interval 1023 to 1043 (GSDASDRHDGYRPIPTGPSAV) is disordered.

Belongs to the cation transport ATPase (P-type) (TC 3.A.3) family. Type IIB subfamily.

The protein localises to the membrane. It catalyses the reaction Ca(2+)(in) + ATP + H2O = Ca(2+)(out) + ADP + phosphate + H(+). Its activity is regulated as follows. Activated by calmodulin. Its function is as follows. This magnesium-dependent enzyme catalyzes the hydrolysis of ATP coupled with the translocation of calcium from the cytosol out of the cell, into the endoplasmic reticulum, or into organelles. The chain is Calcium-transporting ATPase 1, plasma membrane-type from Oryza sativa subsp. japonica (Rice).